The sequence spans 194 residues: FMN-dependent NADH:quinone oxidoreductase (194 aa).

FMN-binding positions include Ser-10 and Met-90–Leu-93.

This sequence belongs to the azoreductase type 1 family. As to quaternary structure, homodimer. FMN is required as a cofactor.

It carries out the reaction 2 a quinone + NADH + H(+) = 2 a 1,4-benzosemiquinone + NAD(+). The catalysed reaction is N,N-dimethyl-1,4-phenylenediamine + anthranilate + 2 NAD(+) = 2-(4-dimethylaminophenyl)diazenylbenzoate + 2 NADH + 2 H(+). Its function is as follows. Quinone reductase that provides resistance to thiol-specific stress caused by electrophilic quinones. Also exhibits azoreductase activity. Catalyzes the reductive cleavage of the azo bond in aromatic azo compounds to the corresponding amines. The sequence is that of FMN-dependent NADH:quinone oxidoreductase from Haemophilus influenzae (strain 86-028NP).